We begin with the raw amino-acid sequence, 366 residues long: tRNA/tmRNA (uracil-C(5))-methyltransferase (366 aa).

S-adenosyl-L-methionine is bound by residues Gln-190, Tyr-218, Asn-223, Glu-239, and Asp-299. Residue Cys-324 is the Nucleophile of the active site. Catalysis depends on Glu-358, which acts as the Proton acceptor.

It belongs to the class I-like SAM-binding methyltransferase superfamily. RNA M5U methyltransferase family. TrmA subfamily.

The enzyme catalyses uridine(54) in tRNA + S-adenosyl-L-methionine = 5-methyluridine(54) in tRNA + S-adenosyl-L-homocysteine + H(+). It carries out the reaction uridine(341) in tmRNA + S-adenosyl-L-methionine = 5-methyluridine(341) in tmRNA + S-adenosyl-L-homocysteine + H(+). Functionally, dual-specificity methyltransferase that catalyzes the formation of 5-methyluridine at position 54 (m5U54) in all tRNAs, and that of position 341 (m5U341) in tmRNA (transfer-mRNA). This is tRNA/tmRNA (uracil-C(5))-methyltransferase from Salmonella paratyphi B (strain ATCC BAA-1250 / SPB7).